Reading from the N-terminus, the 354-residue chain is Protein RecA (354 aa).

67–74 provides a ligand contact to ATP; the sequence is GPESSGKT.

This sequence belongs to the RecA family.

It is found in the cytoplasm. In terms of biological role, can catalyze the hydrolysis of ATP in the presence of single-stranded DNA, the ATP-dependent uptake of single-stranded DNA by duplex DNA, and the ATP-dependent hybridization of homologous single-stranded DNAs. It interacts with LexA causing its activation and leading to its autocatalytic cleavage. The sequence is that of Protein RecA from Serratia marcescens.